The sequence spans 1366 residues: Protein strawberry notch homolog 2 (1366 aa).

4 disordered regions span residues M1–L24, Q174–P217, S614–R640, and H1324–L1366. Positions H15–L24 are enriched in pro residues. The span at P182–E194 shows a compositional bias: acidic residues. The span at S614–K637 shows a compositional bias: basic residues. Residues L1333–P1347 are compositionally biased toward gly residues.

It belongs to the SBNO family. As to quaternary structure, interacts with TAL1; this interaction inhibits TAL1 occupancy of the DCSTAMP promoter, leading to the activation of the DCSTAMP promoter by the transcription factor MITF. Detected in macrophages. IL10 regulates expression in a STAT3-dependent way.

Its function is as follows. Acts as a transcriptional coregulator, that can have both coactivator and corepressor functions. Inhibits the DCSTAMP-repressive activity of TAL1, hence enhancing the access of the transcription factor MITF to the DC-STAMP promoter in osteoclast. Plays a role in bone homeostasis; required as a positive regulator in TNFSF11//RANKL-mediated osteoclast fusion via a DCSTAMP-dependent pathway. May also be required in the regulation of osteoblast differentiation. Involved in the transcriptional corepression of NF-kappaB in macrophages. Plays a role as a regulator in the pro-inflammatory cascade. This chain is Protein strawberry notch homolog 2 (SBNO2), found in Homo sapiens (Human).